A 452-amino-acid chain; its full sequence is Phosphoglucosamine mutase (452 aa).

S108 serves as the catalytic Phosphoserine intermediate. S108, D247, D249, and D251 together coordinate Mg(2+). Position 108 is a phosphoserine (S108).

The protein belongs to the phosphohexose mutase family. Mg(2+) serves as cofactor. In terms of processing, activated by phosphorylation.

It carries out the reaction alpha-D-glucosamine 1-phosphate = D-glucosamine 6-phosphate. In terms of biological role, catalyzes the conversion of glucosamine-6-phosphate to glucosamine-1-phosphate. The polypeptide is Phosphoglucosamine mutase (Paraburkholderia xenovorans (strain LB400)).